An 815-amino-acid chain; its full sequence is Leucine--tRNA ligase (815 aa).

The 'HIGH' region motif lies at 42 to 52; the sequence is PYPSGRLHMGH. The 'KMSKS' region signature appears at 574–578; sequence KMSKS. An ATP-binding site is contributed by Lys577.

This sequence belongs to the class-I aminoacyl-tRNA synthetase family.

The protein resides in the cytoplasm. The catalysed reaction is tRNA(Leu) + L-leucine + ATP = L-leucyl-tRNA(Leu) + AMP + diphosphate. The sequence is that of Leucine--tRNA ligase from Marinomonas sp. (strain MWYL1).